Reading from the N-terminus, the 265-residue chain is Iron(3+)-hydroxamate import ATP-binding protein FhuC (265 aa).

In terms of domain architecture, ABC transporter spans 12-248; the sequence is FALRNISFRV…ETLEMIYGIP (237 aa). ATP is bound by residues 44-51 and 168-179; these read GHNGSGKS and CLLLDEPTSALD.

It belongs to the ABC transporter superfamily. Iron (Fe3+)-hydroxamate importer (TC 3.A.1.14.7) family. The complex is composed of two ATP-binding proteins (FhuC), a transmembrane protein (FhuB) and a solute-binding protein (FhuD). FhuC interacts with FhuB.

Its subcellular location is the cell inner membrane. The catalysed reaction is ATP + H2O + Fe(3+)-hydroxamate complex-[hydroxamate-binding protein]Side 1 = ADP + phosphate + Fe(3+)-hydroxamate complexSide 2 + [hydroxamate-binding protein]Side 1.. ATPase activity is inhibited by vanadate. Part of the ABC transporter complex FhuCDB involved in iron(3+)-hydroxamate import. Responsible for energy coupling to the transport system. The sequence is that of Iron(3+)-hydroxamate import ATP-binding protein FhuC (fhuC) from Escherichia coli (strain K12).